An 855-amino-acid chain; its full sequence is Lon protease (855 aa).

Positions 45–288 (IYLLTVKNVV…ETFRFLNIEY (244 aa)) constitute a Lon N-terminal domain. 439-446 (GPPGVGKT) contacts ATP. The Lon proteolytic domain maps to 674 to 855 (IQVPGVVTGL…NEVIDLSIIK (182 aa)). Residues Ser761 and Lys804 contribute to the active site.

The protein belongs to the peptidase S16 family. In terms of assembly, homohexamer. Organized in a ring with a central cavity.

It localises to the cytoplasm. It carries out the reaction Hydrolysis of proteins in presence of ATP.. Its function is as follows. ATP-dependent serine protease that mediates the selective degradation of mutant and abnormal proteins as well as certain short-lived regulatory proteins. Required for cellular homeostasis and for survival from DNA damage and developmental changes induced by stress. Degrades polypeptides processively to yield small peptide fragments that are 5 to 10 amino acids long. Binds to DNA in a double-stranded, site-specific manner. This Karelsulcia muelleri (strain GWSS) (Sulcia muelleri) protein is Lon protease.